The sequence spans 304 residues: tRNA-uridine aminocarboxypropyltransferase 1 (304 aa).

S2 is subject to N-acetylserine. The DXTW motif lies at 206–209 (DSTW).

The protein belongs to the TDD superfamily. DTWD1 family.

Its subcellular location is the nucleus. It carries out the reaction a uridine in tRNA + S-adenosyl-L-methionine = a 3-[(3S)-3-amino-3-carboxypropyl]uridine in tRNA + S-methyl-5'-thioadenosine + H(+). Functionally, catalyzes the formation of 3-(3-amino-3-carboxypropyl)uridine (acp3U) at position 20 in the D-loop of several cytoplasmic tRNAs (acp3U(20)). In Pongo abelii (Sumatran orangutan), this protein is tRNA-uridine aminocarboxypropyltransferase 1.